A 244-amino-acid chain; its full sequence is NAD(P)H-quinone oxidoreductase subunit K (244 aa).

Residues C51, C52, C116, and C147 each contribute to the [4Fe-4S] cluster site.

It belongs to the complex I 20 kDa subunit family. In terms of assembly, NDH-1 can be composed of about 15 different subunits; different subcomplexes with different compositions have been identified which probably have different functions. The cofactor is [4Fe-4S] cluster.

The protein localises to the cellular thylakoid membrane. It carries out the reaction a plastoquinone + NADH + (n+1) H(+)(in) = a plastoquinol + NAD(+) + n H(+)(out). The catalysed reaction is a plastoquinone + NADPH + (n+1) H(+)(in) = a plastoquinol + NADP(+) + n H(+)(out). Functionally, NDH-1 shuttles electrons from an unknown electron donor, via FMN and iron-sulfur (Fe-S) centers, to quinones in the respiratory and/or the photosynthetic chain. The immediate electron acceptor for the enzyme in this species is believed to be plastoquinone. Couples the redox reaction to proton translocation, and thus conserves the redox energy in a proton gradient. Cyanobacterial NDH-1 also plays a role in inorganic carbon-concentration. This is NAD(P)H-quinone oxidoreductase subunit K from Synechococcus sp. (strain JA-3-3Ab) (Cyanobacteria bacterium Yellowstone A-Prime).